A 357-amino-acid chain; its full sequence is S-adenosyl-L-methionine:benzoic acid/salicylic acid carboxyl methyltransferase 1 (357 aa).

An S-adenosyl-L-homocysteine-binding site is contributed by tyrosine 18. Benzoate is bound at residue glutamine 25. Residues cysteine 59, asparagine 64, aspartate 96, leucine 97, serine 135, and phenylalanine 136 each coordinate S-adenosyl-L-homocysteine. A benzoate-binding site is contributed by tryptophan 157. Asparagine 168, aspartate 254, phenylalanine 256, and asparagine 257 together coordinate Mg(2+). Glutamine 260 contributes to the benzoate binding site.

It belongs to the methyltransferase superfamily. Type-7 methyltransferase family. As to expression, predominantly expressed in petal limbs and tubes of corollas.

The enzyme catalyses benzoate + S-adenosyl-L-methionine = methyl benzoate + S-adenosyl-L-homocysteine. The catalysed reaction is salicylate + S-adenosyl-L-methionine = methyl salicylate + S-adenosyl-L-homocysteine. Its pathway is aromatic compound metabolism. Its function is as follows. Converts benzoic acid into the volatile ester methyl benzoates. This scent, mostly produced in a rhythmical, diurnal manner, attracts the pollinators. The chain is S-adenosyl-L-methionine:benzoic acid/salicylic acid carboxyl methyltransferase 1 from Petunia hybrida (Petunia).